The chain runs to 286 residues: NADH-cytochrome b5 reductase 1 (286 aa).

Residues 6-26 (FILVIIGSVALAAGVKYVFTL) form a helical membrane-spanning segment. Residues 52 to 155 (QEYRKFQLKE…KGPKGKFNYQ (104 aa)) form the FAD-binding FR-type domain. FAD-binding positions include 135–150 (DNMFIGDSIEVKGPKG) and 161–193 (SIGMLAGGTGITPMLQVIKAILKNPSDKTEISL).

This sequence belongs to the flavoprotein pyridine nucleotide cytochrome reductase family. Monomer. The cofactor is FAD.

It localises to the endoplasmic reticulum membrane. It is found in the mitochondrion outer membrane. The catalysed reaction is 2 Fe(III)-[cytochrome b5] + NADH = 2 Fe(II)-[cytochrome b5] + NAD(+) + H(+). Its function is as follows. Electron donor reductase for cytochrome b5. The cytochrome b5/NADH cytochrome b5 reductase electron transfer system supports the catalytic activity of several sterol biosynthetic enzymes. The chain is NADH-cytochrome b5 reductase 1 (cyb5r1) from Dictyostelium discoideum (Social amoeba).